The primary structure comprises 90 residues: Small ribosomal subunit protein uS17 (90 aa).

The protein belongs to the universal ribosomal protein uS17 family. As to quaternary structure, part of the 30S ribosomal subunit.

Functionally, one of the primary rRNA binding proteins, it binds specifically to the 5'-end of 16S ribosomal RNA. This Treponema denticola (strain ATCC 35405 / DSM 14222 / CIP 103919 / JCM 8153 / KCTC 15104) protein is Small ribosomal subunit protein uS17.